A 67-amino-acid polypeptide reads, in one-letter code: ATP synthase protein 8 (67 aa).

The chain crosses the membrane as a helical span at residues 8 to 24 (TWFTTVLSTTITLFILM). At lysine 54 the chain carries N6-acetyllysine; alternate. Lysine 54 is modified (N6-succinyllysine; alternate). Lysine 57 bears the N6-acetyllysine mark.

The protein belongs to the ATPase protein 8 family. In terms of assembly, F-type ATPases have 2 components, CF(1) - the catalytic core - and CF(0) - the membrane proton channel. Component of an ATP synthase complex composed of ATP5PB, ATP5MC1, ATP5F1E, ATP5PD, ATP5ME, ATP5PF, ATP5MF, MT-ATP6, MT-ATP8, ATP5F1A, ATP5F1B, ATP5F1D, ATP5F1C, ATP5PO, ATP5MG, ATP5MK and ATP5MJ. Interacts with PRICKLE3.

The protein localises to the mitochondrion membrane. Functionally, mitochondrial membrane ATP synthase (F(1)F(0) ATP synthase or Complex V) produces ATP from ADP in the presence of a proton gradient across the membrane which is generated by electron transport complexes of the respiratory chain. F-type ATPases consist of two structural domains, F(1) - containing the extramembraneous catalytic core and F(0) - containing the membrane proton channel, linked together by a central stalk and a peripheral stalk. During catalysis, ATP synthesis in the catalytic domain of F(1) is coupled via a rotary mechanism of the central stalk subunits to proton translocation. Part of the complex F(0) domain. Minor subunit located with subunit a in the membrane. In Microtus pennsylvanicus (Meadow vole), this protein is ATP synthase protein 8 (MT-ATP8).